A 668-amino-acid chain; its full sequence is UvrABC system protein B (668 aa).

A Helicase ATP-binding domain is found at 36 to 276; sequence DNIKGGEKAQ…EEAIKNIMEE (241 aa). Position 49–56 (49–56) interacts with ATP; it reads GATGTGKT. The Beta-hairpin signature appears at 102–125; the sequence is YYDYYQPEAYVPSSDTYIEKDSSV. In terms of domain architecture, Helicase C-terminal spans 440-606; the sequence is QMDDLLGEIN…TIKKEIRDLI (167 aa). Positions 632–667 constitute a UVR domain; sequence QEAIKKLQKQMHEAAELLDFELAAQIRDMVLELKSM.

Belongs to the UvrB family. As to quaternary structure, forms a heterotetramer with UvrA during the search for lesions. Interacts with UvrC in an incision complex.

It localises to the cytoplasm. Functionally, the UvrABC repair system catalyzes the recognition and processing of DNA lesions. A damage recognition complex composed of 2 UvrA and 2 UvrB subunits scans DNA for abnormalities. Upon binding of the UvrA(2)B(2) complex to a putative damaged site, the DNA wraps around one UvrB monomer. DNA wrap is dependent on ATP binding by UvrB and probably causes local melting of the DNA helix, facilitating insertion of UvrB beta-hairpin between the DNA strands. Then UvrB probes one DNA strand for the presence of a lesion. If a lesion is found the UvrA subunits dissociate and the UvrB-DNA preincision complex is formed. This complex is subsequently bound by UvrC and the second UvrB is released. If no lesion is found, the DNA wraps around the other UvrB subunit that will check the other stand for damage. This chain is UvrABC system protein B, found in Streptococcus thermophilus (strain ATCC BAA-491 / LMD-9).